We begin with the raw amino-acid sequence, 478 residues long: Zinc metalloproteinase/disintegrin (478 aa).

Residues 1-20 (MIEVLLVTICLAAFPYQGSS) form the signal peptide. Positions 21-187 (IILESGNVND…PIKKASQSNL (167 aa)) are excised as a propeptide. 3 disulfide bridges follow: cysteine 304-cysteine 384, cysteine 344-cysteine 368, and cysteine 346-cysteine 351. Residue histidine 329 coordinates Zn(2+). Glutamate 330 is a catalytic residue. Positions 333 and 339 each coordinate Zn(2+). Residues 390-405 (LRTDTVSTPVSGNELL) constitute a propeptide that is removed on maturation. Residues 397–478 (TPVSGNELLE…AGCPRNPFHA (82 aa)) form the Disintegrin domain. 6 disulfides stabilise this stretch: cysteine 411–cysteine 426, cysteine 413–cysteine 421, cysteine 420–cysteine 443, cysteine 434–cysteine 440, cysteine 439–cysteine 464, and cysteine 452–cysteine 471. Positions 456–458 (RGD) match the Cell attachment site motif.

Belongs to the venom metalloproteinase (M12B) family. P-II subfamily. P-IIa sub-subfamily. Monomer. Expressed by the venom gland.

Its subcellular location is the secreted. Its function is as follows. Binds alpha-5/beta-1 (ITGAV/ITGB1), alpha-V/beta-3 (ITGAV/ITGB3) and alpha-M/beta-2 (ITGAM/ITGB2) integrins. Is a potent inhibitor of platelet aggregation induced by ADP, collagen, and thrombin. Induces neutrophil chemotaxis and inhibits the chemotaxis of human neutrophils toward fMLP, IL-8, and jarastatin itself. Directly activates an integrin-coupled signaling and modulate the MAPK pathway in different ways, leading the neutrophils to express different functional response. Induces Erk-2 translocation to nucleus and a delay of the spontaneous apoptosis of neutrophils. Increases the IL-8 mRNA levels in neutrophils. When injected simultaneously with melanoma cells in mice, jarastatin, flavoridin (FL) and kistrin (KR) significantly reduce tumor lung colonization. Inhibits mouse melanoma B16F10 cell growth in vitro. When it interacts with melanoma cells, it induces actin cytoskeleton rearrangement, increasing actin polymerization and PTK2/FAK1 phosphorylation. Interferes with NF-kappaB translocation in melanoma cells. This is Zinc metalloproteinase/disintegrin from Bothrops jararaca (Jararaca).